A 530-amino-acid polypeptide reads, in one-letter code: AarF domain-containing protein kinase 1 (530 aa).

One can recognise a Protein kinase domain in the interval 155-467 (SFDDTPLGTA…ASSFLNMSRC (313 aa)). Residues 161-169 (LGTASLAQV) and Lys183 each bind ATP. Asp315 (proton acceptor) is an active-site residue.

This sequence belongs to the protein kinase superfamily. ADCK protein kinase family.

The protein localises to the mitochondrion. Its function is as follows. Appears to be essential for maintaining mitochondrial cristae formation and mitochondrial function by acting via YME1L1 in a kinase-independent manner to regulate essential mitochondrial structural proteins OPA1 and IMMT. The action of this enzyme is not yet clear. It is not known if it has protein kinase activity and what type of substrate it would phosphorylate (Ser, Thr or Tyr). In Homo sapiens (Human), this protein is AarF domain-containing protein kinase 1.